Reading from the N-terminus, the 499-residue chain is Long chain base biosynthesis protein 2b (499 aa).

Residues 5 to 25 form a helical membrane-spanning segment; the sequence is VPYVTAATTLFSFGLIFGFGH. N6-(pyridoxal phosphate)lysine is present on lysine 322.

Belongs to the class-II pyridoxal-phosphate-dependent aminotransferase family. As to quaternary structure, heterodimer with LCB1. Component of the serine palmitoyltransferase (SPT) complex, composed of LCB1 and LCB2. Pyridoxal 5'-phosphate serves as cofactor.

The protein localises to the endoplasmic reticulum membrane. The enzyme catalyses L-serine + hexadecanoyl-CoA + H(+) = 3-oxosphinganine + CO2 + CoA. Its pathway is lipid metabolism; sphingolipid metabolism. Functionally, serine palmitoyltransferase (SPT). The heterodimer formed with LCB1 constitutes the catalytic core. In Oryza sativa subsp. japonica (Rice), this protein is Long chain base biosynthesis protein 2b.